The chain runs to 1591 residues: Dicer-like protein 1 (1591 aa).

Composition is skewed to basic and acidic residues over residues 1 to 20 (MEVHDGLKSPDKAAKSRYDD) and 41 to 52 (SKPRKISERKRA). The interval 1-52 (MEVHDGLKSPDKAAKSRYDDDRIDQDSEDEAVRLVANPDPSKPRKISERKRA) is disordered. The region spanning 115–298 (LFERAKQKNT…SYERATHELE (184 aa)) is the Helicase ATP-binding domain. 128–135 (LDTGTGKT) is a binding site for ATP. A DEAH box motif is present at residues 242–245 (DEAH). The Helicase C-terminal domain maps to 439–607 (KLIEILAECF…CLSLPKDRIM (169 aa)). The 91-residue stretch at 639 to 729 (SLVVLAEFVA…KSTLAKVLPA (91 aa)) folds into the Dicer dsRNA-binding fold domain. In terms of domain architecture, PAZ spans 888 to 1012 (TTTDRVPYNF…LVLETLLISQ (125 aa)). 2 consecutive RNase III domains span residues 1050 to 1190 (IDIA…LTAQ) and 1243 to 1406 (CSQI…VDTG). 3 residues coordinate Mg(2+): E1283, D1392, and E1395. One can recognise a DRBM domain in the interval 1440–1514 (THITSIITTQ…AKQAVAIYED (75 aa)). The Zn(2+) site is built by C1452, H1485, C1526, and C1528.

This sequence belongs to the helicase family. Dicer subfamily. Requires Mg(2+) as cofactor. Mn(2+) serves as cofactor.

Its function is as follows. Dicer-like endonuclease which seems not to be involved in cleaving double-stranded RNA in the RNA interference (RNAi) pathway, contrary to its DCL2 counterpart. The polypeptide is Dicer-like protein 1 (DCL1) (Pyricularia oryzae (strain 70-15 / ATCC MYA-4617 / FGSC 8958) (Rice blast fungus)).